A 380-amino-acid polypeptide reads, in one-letter code: Flap endonuclease 1 (380 aa).

Positions 1 to 104 are N-domain; sequence MGIQGLAKLI…GELAKRAERR (104 aa). D34 is a binding site for Mg(2+). Positions 47 and 70 each coordinate DNA. Residues D86, E158, E160, D179, and D181 each coordinate Mg(2+). The segment at 122 to 253 is I-domain; sequence DVNKFQKRLV…KRAIELIRQY (132 aa). E158 contacts DNA. DNA contacts are provided by G231 and D233. Residue D233 coordinates Mg(2+). The segment at 328–380 is disordered; it reads LKNARHTSTQGRLDSFFKVMSSPSVKRKEPPKGAKGSASKKAKMSGGKFKKPK. The interval 336–344 is interaction with PCNA; sequence TQGRLDSFF. Positions 365 to 380 are enriched in basic residues; the sequence is ASKKAKMSGGKFKKPK.

The protein belongs to the XPG/RAD2 endonuclease family. FEN1 subfamily. In terms of assembly, interacts with PCNA. Three molecules of FEN1 bind to one PCNA trimer with each molecule binding to one PCNA monomer. PCNA stimulates the nuclease activity without altering cleavage specificity. Mg(2+) serves as cofactor. In terms of processing, phosphorylated. Phosphorylation upon DNA damage induces relocalization to the nuclear plasma.

The protein localises to the nucleus. The protein resides in the nucleolus. Its subcellular location is the nucleoplasm. It localises to the mitochondrion. Structure-specific nuclease with 5'-flap endonuclease and 5'-3' exonuclease activities involved in DNA replication and repair. During DNA replication, cleaves the 5'-overhanging flap structure that is generated by displacement synthesis when DNA polymerase encounters the 5'-end of a downstream Okazaki fragment. It enters the flap from the 5'-end and then tracks to cleave the flap base, leaving a nick for ligation. Also involved in the long patch base excision repair (LP-BER) pathway, by cleaving within the apurinic/apyrimidinic (AP) site-terminated flap. Acts as a genome stabilization factor that prevents flaps from equilibrating into structures that lead to duplications and deletions. Also possesses 5'-3' exonuclease activity on nicked or gapped double-stranded DNA, and exhibits RNase H activity. Also involved in replication and repair of rDNA and in repairing mitochondrial DNA. This is Flap endonuclease 1 from Branchiostoma floridae (Florida lancelet).